Consider the following 227-residue polypeptide: ATP synthase F(0) complex subunit a (227 aa).

Helical transmembrane passes span 14–34 (FLGI…FPSP), 69–89 (WAMI…LGLL), 98–118 (QLSM…LIGM), 139–159 (IPIL…ALGV), 165–185 (LTAG…MLSI), and 189–209 (IATL…AVAM).

Belongs to the ATPase A chain family. As to quaternary structure, component of the ATP synthase complex composed at least of ATP5F1A/subunit alpha, ATP5F1B/subunit beta, ATP5MC1/subunit c (homooctomer), MT-ATP6/subunit a, MT-ATP8/subunit 8, ATP5ME/subunit e, ATP5MF/subunit f, ATP5MG/subunit g, ATP5MK/subunit k, ATP5MJ/subunit j, ATP5F1C/subunit gamma, ATP5F1D/subunit delta, ATP5F1E/subunit epsilon, ATP5PF/subunit F6, ATP5PB/subunit b, ATP5PD/subunit d, ATP5PO/subunit OSCP. ATP synthase complex consists of a soluble F(1) head domain (subunits alpha(3) and beta(3)) - the catalytic core - and a membrane F(0) domain - the membrane proton channel (subunits c, a, 8, e, f, g, k and j). These two domains are linked by a central stalk (subunits gamma, delta, and epsilon) rotating inside the F1 region and a stationary peripheral stalk (subunits F6, b, d, and OSCP). Interacts with DNAJC30; interaction is direct.

It localises to the mitochondrion inner membrane. It carries out the reaction H(+)(in) = H(+)(out). Functionally, subunit a, of the mitochondrial membrane ATP synthase complex (F(1)F(0) ATP synthase or Complex V) that produces ATP from ADP in the presence of a proton gradient across the membrane which is generated by electron transport complexes of the respiratory chain. ATP synthase complex consist of a soluble F(1) head domain - the catalytic core - and a membrane F(1) domain - the membrane proton channel. These two domains are linked by a central stalk rotating inside the F(1) region and a stationary peripheral stalk. During catalysis, ATP synthesis in the catalytic domain of F(1) is coupled via a rotary mechanism of the central stalk subunits to proton translocation. With the subunit c (ATP5MC1), forms the proton-conducting channel in the F(0) domain, that contains two crucial half-channels (inlet and outlet) that facilitate proton movement from the mitochondrial intermembrane space (IMS) into the matrix. Protons are taken up via the inlet half-channel and released through the outlet half-channel, following a Grotthuss mechanism. This is ATP synthase F(0) complex subunit a from Polypterus ornatipinnis (Ornate bichir).